The sequence spans 185 residues: Erythropoietin (185 aa).

A signal peptide spans 1–22 (MLQKRGRGLLVLLLMLLEWTRP). 2 disulfide bridges follow: cysteine 32–cysteine 180 and cysteine 54–cysteine 58.

This sequence belongs to the EPO/TPO family.

It is found in the secreted. Erythropoietin is the principal hormone involved in the regulation of erythrocyte differentiation and the maintenance of a physiological level of circulating erythrocyte mass. The chain is Erythropoietin (epo) from Epinephelus coioides (Orange-spotted grouper).